Here is a 252-residue protein sequence, read N- to C-terminus: ATP-dependent L-serine kinase (252 aa).

E35 is a catalytic residue. An O-phospho-L-serine-binding site is contributed by V73. D74 lines the Mg(2+) pocket. Residues G75, H76, H77, W107, K231, T233, and H235 each contribute to the O-phospho-L-serine site.

Belongs to the SerK family. Monomer. Requires Mg(2+) as cofactor.

It catalyses the reaction L-serine + ATP = O-phospho-L-serine + ADP + H(+). In terms of biological role, free serine kinase that uses ATP to phosphorylate L-serine to yield O-phospho-L-serine and ADP. Can use ATP, UTP, CTP, GTP and the inorganic polyphosphates triphosphate and tetraphosphate as phosphate donors, with a preference for nucleoside 5'-triphosphates, but cannot use ADP. The catalytic efficiency is highest for ATP. Is specific for L-serine and cannot phosphorylate structurally similar compounds such as D-serine, L-threonine, L-homoserine, hydroxypyruvate, 3-hydroxypropionate and DL-glycerate. Likely contributes to serine metabolism, including cysteine biosynthesis. In Staphylothermus marinus (strain ATCC 43588 / DSM 3639 / JCM 9404 / F1), this protein is ATP-dependent L-serine kinase.